We begin with the raw amino-acid sequence, 208 residues long: Glutathione S-transferase F6 (208 aa).

The GST N-terminal domain maps to 2–83 (AGIKVFGHPA…YIAHEFSDKG (82 aa)). Glutathione-binding positions include 12–13 (ST), 41–42 (HK), 54–55 (KV), and 67–68 (ES). Positions 89–208 (TGKDMAIIAM…TSRPSAQKVL (120 aa)) constitute a GST C-terminal domain.

It belongs to the GST superfamily. Phi family.

The protein localises to the cytoplasm. The protein resides in the cytosol. The catalysed reaction is RX + glutathione = an S-substituted glutathione + a halide anion + H(+). Functionally, involved in camalexin biosynthesis by probably catalyzing the conjugation of GSH with indole-3-acetonitrile (IAN). May be involved in the conjugation of reduced glutathione to a wide number of exogenous and endogenous hydrophobic electrophiles and have a detoxification role against certain herbicides. This is Glutathione S-transferase F6 (GSTF6) from Arabidopsis thaliana (Mouse-ear cress).